A 130-amino-acid polypeptide reads, in one-letter code: Small ribosomal subunit protein uS8 (130 aa).

The protein belongs to the universal ribosomal protein uS8 family.

In Candida glabrata (strain ATCC 2001 / BCRC 20586 / JCM 3761 / NBRC 0622 / NRRL Y-65 / CBS 138) (Yeast), this protein is Small ribosomal subunit protein uS8 (RPS22).